Reading from the N-terminus, the 811-residue chain is Ent-13-epi-manoyl oxide synthase KSL2, chloroplastic (811 aa).

A chloroplast-targeting transit peptide spans 1–49; that stretch reads MALPLSTCLLFHPKESRSRRFCFSPASAASLKSGLHSATSAKIASMPTC. D550, D554, N694, and E702 together coordinate Mg(2+). The short motif at 550 to 554 is the DDXXD motif element; the sequence is DDFFD.

The protein belongs to the terpene synthase family. Mg(2+) is required as a cofactor.

It is found in the plastid. It localises to the chloroplast. It carries out the reaction ent-8alpha-hydroxylabd-13-en-15-yl diphosphate = ent-13-epi-manoyl oxide + diphosphate. Its pathway is secondary metabolite biosynthesis; terpenoid biosynthesis. Functionally, involved in diterpenoid biosynthesis. Catalyzes the conversion of ent-8alpha-hydroxylabd-13-en-15-yl diphosphate to ent-13-epi-manoyl oxide. This Salvia miltiorrhiza (Chinese sage) protein is Ent-13-epi-manoyl oxide synthase KSL2, chloroplastic.